The sequence spans 80 residues: Centromere protein X (80 aa).

Belongs to the CENP-X/MHF2 family. Heterodimer with CENPX, sometimes called MHF; this interaction stabilizes both partners. MHF heterodimers can assemble to form tetrameric structures. MHF also coassemble with CENPT-CENPW heterodimers at centromeres to form the tetrameric CENP-T-W-S-X complex. Forms a discrete complex with FANCM and CENPX, called FANCM-MHF; this interaction, probably mediated by direct binding between CENPS and FANCM, leads to synergistic activation of double-stranded DNA binding and strongly stimulates FANCM-mediated DNA remodeling. Recruited by FANCM to the Fanconi anemia (FA) core complex, which consists of CENPS, CENPX, FANCA, FANCB, FANCC, FANCE, FANCF, FANCG, FANCL, FANCM, FAAP24 and FAAP100. The FA core complex associates with Bloom syndrome (BLM) complex, which consists of at least BLM, DNA topoisomerase 3-alpha (TOP3A), RMI1/BLAP75, RPA1/RPA70 and RPA2/RPA32. The super complex between FA and BLM is called BRAFT.

It localises to the nucleus. It is found in the chromosome. Its subcellular location is the centromere. The protein resides in the kinetochore. Functionally, DNA-binding component of the Fanconi anemia (FA) core complex. Required for the normal activation of the FA pathway, leading to monoubiquitination of the FANCI-FANCD2 complex in response to DNA damage, cellular resistance to DNA cross-linking drugs, and prevention of chromosomal breakage. In complex with CENPS (MHF heterodimer), crucial cofactor for FANCM in both binding and ATP-dependent remodeling of DNA. Stabilizes FANCM. In complex with CENPS and FANCM (but not other FANC proteins), rapidly recruited to blocked forks and promotes gene conversion at blocked replication forks. In complex with CENPS, CENPT and CENPW (CENP-T-W-S-X heterotetramer), involved in the formation of a functional kinetochore outer plate, which is essential for kinetochore-microtubule attachment and faithful mitotic progression. As a component of MHF and CENP-T-W-S-X complexes, binds DNA and bends it to form a nucleosome-like structure. DNA-binding function is fulfilled in the presence of CENPS, with the following preference for DNA substates: Holliday junction &gt; double-stranded &gt; splay arm &gt; single-stranded. Does not bind DNA on its own. The chain is Centromere protein X (CENPX) from Gallus gallus (Chicken).